Consider the following 275-residue polypeptide: Apoptosis inhibitor 1 (275 aa).

BIR repeat units lie at residues 24 to 91 and 126 to 193; these read LIER…CVYA and PSAR…CYFV. Residues Cys-163, Cys-166, His-183, and Cys-190 each coordinate Zn(2+). The RING-type zinc-finger motif lies at 227–263; the sequence is CKVCLERQRDAVLLPCRHFCVCMQCYFALDGKCPTCR.

Functionally, acts by blocking cellular apoptosis rather than by preventing viral stimulation of apoptosis. The protein is Apoptosis inhibitor 1 (IAP1) of Orgyia pseudotsugata (Douglas-fir tussock moth).